The sequence spans 234 residues: Segregation and condensation protein A (234 aa).

The protein belongs to the ScpA family. As to quaternary structure, component of a cohesin-like complex composed of ScpA, ScpB and the Smc homodimer, in which ScpA and ScpB bind to the head domain of Smc. The presence of the three proteins is required for the association of the complex with DNA.

It localises to the cytoplasm. Participates in chromosomal partition during cell division. May act via the formation of a condensin-like complex containing Smc and ScpB that pull DNA away from mid-cell into both cell halves. The chain is Segregation and condensation protein A from Streptococcus pyogenes serotype M18 (strain MGAS8232).